Reading from the N-terminus, the 24-residue chain is General odorant-binding protein (24 aa).

This sequence belongs to the PBP/GOBP family. Homodimer. In terms of tissue distribution, antenna.

In terms of biological role, present in the aqueous fluid surrounding olfactory sensory dendrites and are thought to aid in the capture and transport of hydrophobic odorants into and through this fluid. This Antheraea polyphemus (Polyphemus moth) protein is General odorant-binding protein.